The chain runs to 2347 residues: Proto-oncogene tyrosine-protein kinase ROS (2347 aa).

A signal peptide spans 1–27; sequence MKNIYCLIPKLVNFATLGCLWISVVQC. Topologically, residues 28–1859 are extracellular; it reads TVLNSCLKSC…LVGDDFWIPE (1832 aa). N-linked (GlcNAc...) asparagine glycans are attached at residues asparagine 52, asparagine 114, and asparagine 123. Fibronectin type-III domains are found at residues 101-196 and 197-285; these read LPTA…VPET and APLI…SSSA. Asparagine 324, asparagine 352, asparagine 396, asparagine 471, asparagine 607, asparagine 628, asparagine 706, asparagine 714, asparagine 732, asparagine 939, asparagine 961, asparagine 1015, asparagine 1087, asparagine 1090, asparagine 1095, asparagine 1211, asparagine 1272, asparagine 1330, asparagine 1458, asparagine 1461, asparagine 1474, asparagine 1499, asparagine 1565, asparagine 1669, asparagine 1715, asparagine 1738, and asparagine 1808 each carry an N-linked (GlcNAc...) asparagine glycan. The region spanning 557–671 is the Fibronectin type-III 3 domain; the sequence is LPGRPQELSV…EPSVGTTLVP (115 aa). 2 Fibronectin type-III domains span residues 947 to 1042 and 1043 to 1150; these read IPDS…TVPS and APEN…TSEI. 4 consecutive Fibronectin type-III domains span residues 1450–1556, 1557–1656, 1658–1751, and 1752–1854; these read DTVE…TKNG, VPEA…VEMF, TPEK…TKAG, and VPNK…VGDD. A helical membrane pass occupies residues 1860 to 1882; sequence TSFILTIIVGIFLVVTIPLTFVW. The Cytoplasmic portion of the chain corresponds to 1883 to 2347; that stretch reads HRRLKNQKSA…THSGYGDGSD (465 aa). A Protein kinase domain is found at 1945–2222; it reads LTLRLLLGSG…DQLQLFRNFF (278 aa). Residues 1951 to 1959 and lysine 1980 each bind ATP; that span reads LGSGAFGEV. Aspartate 2079 serves as the catalytic Proton acceptor. The residue at position 2274 (tyrosine 2274) is a Phosphotyrosine; by autocatalysis. The tract at residues 2284–2311 is disordered; it reads GEEKSEGPLGSQESESCGLRKEEKEPHA. Positions 2301–2311 are enriched in basic and acidic residues; the sequence is GLRKEEKEPHA. Position 2334 is a phosphotyrosine; by autocatalysis (tyrosine 2334).

This sequence belongs to the protein kinase superfamily. Tyr protein kinase family. Insulin receptor subfamily. As to quaternary structure, interacts with PTPN6 (via SH2 1 domain); the interaction is direct and promotes ROS1 dephosphorylation. Interacts with PTPN11; may activate the PI3 kinase-mTOR signaling pathway. Interacts with VAV3; constitutive interaction mediating VAV3 phosphorylation. Post-translationally, phosphorylated. Probably autophosphorylates. Phosphorylation at Tyr-2274 is required for the interaction with PTPN6 that mediates ROS1 dephosphorylation. Phosphorylation at Tyr-2274 stimulates the kinase activity and the activation of the ERK1 signaling cascade. Phosphorylation at Tyr-2274 and/or Tyr-2334 recruits PTPN11. In terms of tissue distribution, expressed in brain. Expression is increased in primary gliomas.

It is found in the cell membrane. It catalyses the reaction L-tyrosyl-[protein] + ATP = O-phospho-L-tyrosyl-[protein] + ADP + H(+). With respect to regulation, inhibited by dephosphorylation by PTPN6. In terms of biological role, receptor tyrosine kinase (RTK) that plays a role in epithelial cell differentiation and regionalization of the proximal epididymal epithelium. NELL2 is an endogenous ligand for ROS1. Upon endogenous stimulation by NELL2, ROS1 activates the intracellular signaling pathway and triggers epididymal epithelial differentiation and subsequent sperm maturation. May activate several downstream signaling pathways related to cell differentiation, proliferation, growth and survival including the PI3 kinase-mTOR signaling pathway. Mediates the phosphorylation of PTPN11, an activator of this pathway. May also phosphorylate and activate the transcription factor STAT3 to control anchorage-independent cell growth. Mediates the phosphorylation and the activation of VAV3, a guanine nucleotide exchange factor regulating cell morphology. May activate other downstream signaling proteins including AKT1, MAPK1, MAPK3, IRS1 and PLCG2. In Homo sapiens (Human), this protein is Proto-oncogene tyrosine-protein kinase ROS (ROS1).